The chain runs to 356 residues: Methylthioribose-1-phosphate isomerase (356 aa).

Residues 53-55, arginine 97, and glutamine 203 contribute to the substrate site; that span reads RGA. Aspartate 244 functions as the Proton donor in the catalytic mechanism. Residue 254-255 coordinates substrate; it reads NK.

The protein belongs to the eIF-2B alpha/beta/delta subunits family. MtnA subfamily.

It catalyses the reaction 5-(methylsulfanyl)-alpha-D-ribose 1-phosphate = 5-(methylsulfanyl)-D-ribulose 1-phosphate. Its pathway is amino-acid biosynthesis; L-methionine biosynthesis via salvage pathway; L-methionine from S-methyl-5-thio-alpha-D-ribose 1-phosphate: step 1/6. Its function is as follows. Catalyzes the interconversion of methylthioribose-1-phosphate (MTR-1-P) into methylthioribulose-1-phosphate (MTRu-1-P). In Rhodopirellula baltica (strain DSM 10527 / NCIMB 13988 / SH1), this protein is Methylthioribose-1-phosphate isomerase.